Consider the following 443-residue polypeptide: Threonine/serine transporter TdcC (443 aa).

A run of 11 helical transmembrane segments spans residues 22-42 (TTWT…FFPI), 44-64 (AGFG…PIAF), 97-117 (GVVI…IYGV), 140-160 (FVAL…KDLM), 163-183 (VMSY…LSLI), 207-227 (ILIT…FSPI), 261-281 (MLMV…LSPA), 311-331 (FAIT…FKSF), 366-386 (ISMI…PNIL), 389-409 (IEAM…MYAI), and 423-443 (DNVF…YKLF).

It belongs to the amino acid/polyamine transporter 2 family. SdaC/TdcC subfamily.

It localises to the cell inner membrane. It catalyses the reaction L-threonine(in) + H(+)(in) = L-threonine(out) + H(+)(out). It carries out the reaction L-serine(in) + H(+)(in) = L-serine(out) + H(+)(out). Functionally, involved in the import of threonine and serine into the cell, with the concomitant import of a proton (symport system). In Shigella sonnei (strain Ss046), this protein is Threonine/serine transporter TdcC.